Consider the following 479-residue polypeptide: Anaerobic nitric oxide reductase flavorubredoxin (479 aa).

Residues 30–210 are zinc metallo-hydrolase; the sequence is LRGSSYNSYL…PFSRLVTPKI (181 aa). Fe cation is bound by residues histidine 79, glutamate 81, aspartate 83, histidine 147, aspartate 166, and histidine 227. Positions 254-393 constitute a Flavodoxin-like domain; sequence ITIFYDTMSN…LCREHGREIA (140 aa). FMN contacts are provided by residues 260–264 and 342–369; these read TMSNN and AFGSHGWSGGAVDRLSTRLQDAGFEMSL. One can recognise a Rubredoxin-like domain in the interval 423–474; it reads GPRMQCSVCQWIYDPAKGEPMQDVAPGTPWSEVPDNFLCPECSLGKDVFEEL. 4 residues coordinate Fe cation: cysteine 428, cysteine 431, cysteine 461, and cysteine 464.

It in the N-terminal section; belongs to the zinc metallo-hydrolase group 3 family. In terms of assembly, homotetramer. Fe cation serves as cofactor. It depends on FMN as a cofactor.

The protein resides in the cytoplasm. It participates in nitrogen metabolism; nitric oxide reduction. Anaerobic nitric oxide reductase; uses NADH to detoxify nitric oxide (NO), protecting several 4Fe-4S NO-sensitive enzymes. Has at least 2 reductase partners, only one of which (NorW, flavorubredoxin reductase) has been identified. NO probably binds to the di-iron center; electrons enter from the NorW at rubredoxin and are transferred sequentially to the FMN center and the di-iron center. Also able to function as an aerobic oxygen reductase. In Escherichia coli O139:H28 (strain E24377A / ETEC), this protein is Anaerobic nitric oxide reductase flavorubredoxin.